The primary structure comprises 128 residues: Sulfurtransferase TusD (128 aa).

Cys78 serves as the catalytic Cysteine persulfide intermediate.

This sequence belongs to the DsrE/TusD family. As to quaternary structure, heterohexamer, formed by a dimer of trimers. The hexameric TusBCD complex contains 2 copies each of TusB, TusC and TusD. The TusBCD complex interacts with TusE.

The protein localises to the cytoplasm. Functionally, part of a sulfur-relay system required for 2-thiolation of 5-methylaminomethyl-2-thiouridine (mnm(5)s(2)U) at tRNA wobble positions. Accepts sulfur from TusA and transfers it in turn to TusE. This Salmonella newport (strain SL254) protein is Sulfurtransferase TusD.